A 3354-amino-acid polypeptide reads, in one-letter code: Cadherin-23 (3354 aa).

The N-terminal stretch at 1-23 is a signal peptide; sequence MRYSLVTCYAVLWLLMLVPGSWG. Residues 24–3064 are Extracellular-facing; the sequence is QVNRLPFFTN…SVQLPDDMSA (3041 aa). 27 Cadherin domains span residues 34–132, 133–236, 237–348, 349–460, 461–561, 562–671, 672–784, 779–890, 891–995, 996–1102, 1103–1208, 1210–1313, 1314–1418, 1420–1527, 1529–1634, 1635–1744, 1745–1851, 1852–1959, 1960–2069, 2070–2174, 2175–2293, 2297–2402, 2403–2509, 2510–2611, 2614–2722, 2729–2846, and 2847–2975; these read HFFD…APTF, HNQP…DPIF, INLP…APEF, NSSE…RPIF, SQPL…VPTF, QKDA…PPTF, SKPA…APYY, KDAP…DPTF, RNLP…TPTF, FPAV…RPIF, LQSS…APVF, QQQY…AVQF, SNAS…SPRF, FTSD…PPVI, SPFG…APVF, QQPH…VPTF, PRDY…DPVL, LNLP…HPLF, TEGT…WPTF, SPPT…RPEF, LNPI…TPQF, GITY…NPIF, DQPS…RPQF, SKPQ…RPVF, PPNG…EPLF, SPQY…PPRF, and TKAE…EEEF. N155 and N206 each carry an N-linked (GlcNAc...) asparagine glycan. N-linked (GlcNAc...) asparagine glycosylation is found at N349, N393, N434, N466, N472, N602, N694, N765, N810, N827, N941, N1001, N1018, N1171, N1282, N1315, N1473, N1534, N1651, N1667, N1818, N1857, N1889, N1902, N2014, N2050, N2129, N2168, N2195, N2263, N2357, and N2369. N-linked (GlcNAc...) asparagine glycans are attached at residues N2578, N2616, N2749, N2808, N2877, N2896, N2941, and N2981. A helical membrane pass occupies residues 3065–3085; the sequence is LQMAIIVLAILLFLAAMLFVL. At 3086–3354 the chain is on the cytoplasmic side; that stretch reads MNWYYRTIHK…MESPLEITEL (269 aa).

In terms of assembly, interacts with USH1C and USH1G. antiparallel heterodimer with PCDH15. Isoform C1: Interacts with CAMSAP3; leading to inhibit CAMSAP3 ability to induce microtubule bundle formation. In adult animals relatively high levels of expression are found in testis, skeletal muscle, heart, eye and thymus, and lower expression in kidney, lung and brain. Found in the sensory hair cells of the inner ear.

The protein localises to the cell membrane. Its function is as follows. Cadherins are calcium-dependent cell adhesion proteins. They preferentially interact with themselves in a homophilic manner in connecting cells. CDH23 is required for establishing and/or maintaining the proper organization of the stereocilia bundle of hair cells in the cochlea and the vestibule during late embryonic/early postnatal development. It is part of the functional network formed by USH1C, USH1G, CDH23 and MYO7A that mediates mechanotransduction in cochlear hair cells. Required for normal hearing. This chain is Cadherin-23 (Cdh23), found in Mus musculus (Mouse).